Consider the following 430-residue polypeptide: Tryptophan synthase beta chain (430 aa).

Residue Lys95 is modified to N6-(pyridoxal phosphate)lysine.

This sequence belongs to the TrpB family. As to quaternary structure, tetramer of two alpha and two beta chains. The cofactor is pyridoxal 5'-phosphate.

It carries out the reaction (1S,2R)-1-C-(indol-3-yl)glycerol 3-phosphate + L-serine = D-glyceraldehyde 3-phosphate + L-tryptophan + H2O. The protein operates within amino-acid biosynthesis; L-tryptophan biosynthesis; L-tryptophan from chorismate: step 5/5. In terms of biological role, the beta subunit is responsible for the synthesis of L-tryptophan from indole and L-serine. The polypeptide is Tryptophan synthase beta chain (Halobacterium salinarum (strain ATCC 29341 / DSM 671 / R1)).